The following is a 240-amino-acid chain: Myomodulin neuropeptides 2 (240 aa).

The signal sequence occupies residues 1–23 (MWKILETCSCFLVVAVLSGLGKA). The tract at residues 23-44 (AQPESFSGSAVTDDSTSGANKR) is disordered. Residues 24-44 (QPESFSGSAVTDDSTSGANKR) constitute a propeptide that is removed on maturation. The span at 26–41 (ESFSGSAVTDDSTSGA) shows a compositional bias: polar residues. Leucine 51 and leucine 60 each carry leucine amide. 2 consecutive propeptides (connecting peptide) follow at residues 72 to 81 (SGHQVPMLRA) and 84 to 112 (GSPD…RDQS). At alanine 81 the chain carries Alanine amide. The residue at position 115 (glutamine 115) is a Pyrrolidone carboxylic acid. Tyrosine 121 is modified (tyrosine amide). 10 propeptides (connecting peptide) span residues 124 to 147 (DNNG…SNFD), 124 to 148 (DNNG…NFDL), 124 to 149 (DNNG…FDLL), 124 to 168 (DNNG…GGRY), 131 to 168 (DLLD…GGRY), 149 to 168 (LSSL…GGRY), 150 to 168 (SSLN…GGRY), 151 to 168 (SLNN…GGRY), 171 to 190 (SLPD…LVQS), and 171 to 199 (SLPD…PYSS). Isoleucine 207 is modified (isoleucine amide). Positions 210–219 (FSGSPRLQAK) are excised as a propeptide. Residues 212-240 (GSPRLQAKAVPRPRIGRQESQMREAKSAE) form a disordered region. Position 226 is an isoleucine amide (isoleucine 226). A propeptide spanning residues 227 to 240 (GRQESQMREAKSAE) is cleaved from the precursor. Over residues 227 to 240 (GRQESQMREAKSAE) the composition is skewed to basic and acidic residues.

As to expression, expressed in the pedal-buccal projection neurons in the pedal ganglion.

It localises to the secreted. Its function is as follows. MMG2-DPs (Myomodulin gene 2-derived peptides) bias egestive feeding programs toward ingestive ones, and modulate accessory radula closer (ARC) muscle contractions. In Aplysia californica (California sea hare), this protein is Myomodulin neuropeptides 2 (MMG2).